A 167-amino-acid polypeptide reads, in one-letter code: Translation initiation factor IF-3 (167 aa).

Belongs to the IF-3 family. In terms of assembly, monomer.

The protein localises to the cytoplasm. Its function is as follows. IF-3 binds to the 30S ribosomal subunit and shifts the equilibrium between 70S ribosomes and their 50S and 30S subunits in favor of the free subunits, thus enhancing the availability of 30S subunits on which protein synthesis initiation begins. This Shouchella clausii (strain KSM-K16) (Alkalihalobacillus clausii) protein is Translation initiation factor IF-3.